Here is a 1247-residue protein sequence, read N- to C-terminus: Probable phosphorylase b kinase regulatory subunit alpha (1247 aa).

The calmodulin-binding stretch occupies residues 853–883; the sequence is LKGLYEKACQQKLWGLVRHTAGMLGKRVEDL. Ser-1030 and Ser-1033 each carry phosphoserine. Residues 1052–1089 are calmodulin-binding; that stretch reads DRQGQWLRRRRLDGALNRVPRDFYSRVWTVLEKCQGLA. Cys-1244 is lipidated: S-farnesyl cysteine.

The protein belongs to the phosphorylase b kinase regulatory chain family. Although the final Cys may be farnesylated, the terminal tripeptide is probably not removed, and the C-terminus is not methylated.

Its subcellular location is the cell membrane. The protein operates within glycan biosynthesis; glycogen metabolism. Its function is as follows. Phosphorylase b kinase catalyzes the phosphorylation of serine in certain substrates, including troponin I. The alpha chain may bind calmodulin. This Drosophila melanogaster (Fruit fly) protein is Probable phosphorylase b kinase regulatory subunit alpha.